We begin with the raw amino-acid sequence, 613 residues long: Autophagy-related protein 22-2 (613 aa).

Residues 1-30 (MAFNSTPPVSPGGEAQQRPPRFPGEDTTPT) are disordered. Residues 41-61 (YGIAAEVFAVCGVGSFLPLTL) traverse the membrane as a helical segment. N-linked (GlcNAc...) asparagine glycosylation is present at Asn90. The next 7 membrane-spanning stretches (helical) occupy residues 120–140 (SFAM…LISF), 167–187 (LFIF…VVGV), 189–209 (CLGS…ANDP), 278–298 (VGLG…MLFA), 307–327 (ISGT…WFSF), 382–402 (VIIF…VSGT), and 418–438 (VGLL…LWPV). The N-linked (GlcNAc...) asparagine glycan is linked to Asn448. The next 4 membrane-spanning stretches (helical) occupy residues 453-473 (LCIA…IPLF), 477-497 (GVVG…HGLV), 508-528 (FFGL…YAAT), and 553-573 (GFFF…MVNA). The disordered stretch occupies residues 592–613 (REHASEYGGPSEEAEGLLARDI).

Belongs to the ATG22 family.

It is found in the vacuole membrane. Functionally, vacuolar effluxer which mediate the efflux of amino acids resulting from autophagic degradation. The release of autophagic amino acids allows the maintenance of protein synthesis and viability during nitrogen starvation. The polypeptide is Autophagy-related protein 22-2 (atg22-2) (Aspergillus fumigatus (strain ATCC MYA-4609 / CBS 101355 / FGSC A1100 / Af293) (Neosartorya fumigata)).